Consider the following 346-residue polypeptide: Protein U59 (346 aa).

The protein belongs to the herpesviridae U59/UL88 family.

In Elephantid herpesvirus 1 (isolate Asian elephant/Berlin/Kiba/1998) (EIHV-1), this protein is Protein U59.